Here is a 100-residue protein sequence, read N- to C-terminus: Urease subunit gamma (100 aa).

It belongs to the urease gamma subunit family. In terms of assembly, heterotrimer of UreA (gamma), UreB (beta) and UreC (alpha) subunits. Three heterotrimers associate to form the active enzyme.

Its subcellular location is the cytoplasm. The enzyme catalyses urea + 2 H2O + H(+) = hydrogencarbonate + 2 NH4(+). It participates in nitrogen metabolism; urea degradation; CO(2) and NH(3) from urea (urease route): step 1/1. This is Urease subunit gamma from Cupriavidus necator (strain ATCC 17699 / DSM 428 / KCTC 22496 / NCIMB 10442 / H16 / Stanier 337) (Ralstonia eutropha).